A 124-amino-acid chain; its full sequence is Fluoride-specific ion channel FluC 1 (124 aa).

4 consecutive transmembrane segments (helical) span residues 1-21, 30-50, 56-76, and 102-122; these read MNWLLVIAGAMVGAPLRYVTD, AVFPWGTFAINVTGCLVLGLL, AGVASPHLELLLGTGLCGALT, and IASVAAGLGAAFAGVWFAQAL. Positions 73 and 76 each coordinate Na(+).

This sequence belongs to the fluoride channel Fluc/FEX (TC 1.A.43) family.

It localises to the cell membrane. The catalysed reaction is fluoride(in) = fluoride(out). Na(+) is not transported, but it plays an essential structural role and its presence is essential for fluoride channel function. Fluoride-specific ion channel. Important for reducing fluoride concentration in the cell, thus reducing its toxicity. In Streptomyces avermitilis (strain ATCC 31267 / DSM 46492 / JCM 5070 / NBRC 14893 / NCIMB 12804 / NRRL 8165 / MA-4680), this protein is Fluoride-specific ion channel FluC 1.